Here is a 261-residue protein sequence, read N- to C-terminus: Na(+)-translocating NADH-quinone reductase subunit C (261 aa).

A helical membrane pass occupies residues 11–31; the sequence is LLVALVVCLVSSVFVAGAAVA. Threonine 230 is modified (FMN phosphoryl threonine).

This sequence belongs to the NqrC family. Composed of six subunits; NqrA, NqrB, NqrC, NqrD, NqrE and NqrF. The cofactor is FMN.

The protein resides in the cell inner membrane. The enzyme catalyses a ubiquinone + n Na(+)(in) + NADH + H(+) = a ubiquinol + n Na(+)(out) + NAD(+). In terms of biological role, NQR complex catalyzes the reduction of ubiquinone-1 to ubiquinol by two successive reactions, coupled with the transport of Na(+) ions from the cytoplasm to the periplasm. NqrA to NqrE are probably involved in the second step, the conversion of ubisemiquinone to ubiquinol. In Pseudomonas aeruginosa (strain ATCC 15692 / DSM 22644 / CIP 104116 / JCM 14847 / LMG 12228 / 1C / PRS 101 / PAO1), this protein is Na(+)-translocating NADH-quinone reductase subunit C.